Reading from the N-terminus, the 1384-residue chain is DNA-directed RNA polymerase subunit beta (1384 aa).

Belongs to the RNA polymerase beta chain family. The RNAP catalytic core consists of 2 alpha, 1 beta, 1 beta' and 1 omega subunit. When a sigma factor is associated with the core the holoenzyme is formed, which can initiate transcription.

The enzyme catalyses RNA(n) + a ribonucleoside 5'-triphosphate = RNA(n+1) + diphosphate. Functionally, DNA-dependent RNA polymerase catalyzes the transcription of DNA into RNA using the four ribonucleoside triphosphates as substrates. This is DNA-directed RNA polymerase subunit beta from Stenotrophomonas maltophilia (strain R551-3).